A 248-amino-acid polypeptide reads, in one-letter code: MAGHSQFKNIMHRKGRQDAVRSKMFSKLAREITVAAKTGLPDPTMNPRLRLAIQNAKAQSMPKDNIERAVKKAAGGDAENYEEVRYEGYGPGGVAVIVEALTDNRNRTASNVRSTFTKAGGALGETGSVSFSFDRVGEITYKLSAGDADKVMEAAIEAGADDVETDEEGHTITCGFEDIGEVSKALEGALGEAETVKAVWKPQNTVPVDEEKAQSLMKLIDNLEDDDDVQNVYSNFEVSDEVLAKLSA.

It belongs to the TACO1 family.

The protein resides in the cytoplasm. This Rhizobium meliloti (strain 1021) (Ensifer meliloti) protein is Probable transcriptional regulatory protein R02753.